Consider the following 144-residue polypeptide: Deoxyuridine 5'-triphosphate nucleotidohydrolase (144 aa).

Substrate contacts are provided by residues 63–65 (RSG), Asn76, and 80–82 (TVD).

This sequence belongs to the dUTPase family. The cofactor is Mg(2+).

The enzyme catalyses dUTP + H2O = dUMP + diphosphate + H(+). The protein operates within pyrimidine metabolism; dUMP biosynthesis; dUMP from dCTP (dUTP route): step 2/2. This enzyme is involved in nucleotide metabolism: it produces dUMP, the immediate precursor of thymidine nucleotides and it decreases the intracellular concentration of dUTP so that uracil cannot be incorporated into DNA. This chain is Deoxyuridine 5'-triphosphate nucleotidohydrolase, found in Flavobacterium johnsoniae (strain ATCC 17061 / DSM 2064 / JCM 8514 / BCRC 14874 / CCUG 350202 / NBRC 14942 / NCIMB 11054 / UW101) (Cytophaga johnsonae).